A 233-amino-acid chain; its full sequence is Uridylate kinase (233 aa).

ATP contacts are provided by residues 8–11, Gly-51, and Arg-55; that span reads KLSG. Residues Asp-68 and 129–136 each bind UMP; that span reads TSNPFFTT. 3 residues coordinate ATP: Thr-156, Tyr-162, and Asp-165.

This sequence belongs to the UMP kinase family. Homohexamer.

It is found in the cytoplasm. The enzyme catalyses UMP + ATP = UDP + ADP. The protein operates within pyrimidine metabolism; CTP biosynthesis via de novo pathway; UDP from UMP (UMPK route): step 1/1. With respect to regulation, inhibited by UTP. Functionally, catalyzes the reversible phosphorylation of UMP to UDP. The chain is Uridylate kinase from Pseudothermotoga lettingae (strain ATCC BAA-301 / DSM 14385 / NBRC 107922 / TMO) (Thermotoga lettingae).